The following is a 252-amino-acid chain: Ribosomal RNA small subunit methyltransferase A (252 aa).

Residues Asn-10, Leu-12, Gly-36, Glu-57, Asp-81, and Asn-98 each coordinate S-adenosyl-L-methionine.

This sequence belongs to the class I-like SAM-binding methyltransferase superfamily. rRNA adenine N(6)-methyltransferase family. RsmA subfamily.

It localises to the cytoplasm. The catalysed reaction is adenosine(1518)/adenosine(1519) in 16S rRNA + 4 S-adenosyl-L-methionine = N(6)-dimethyladenosine(1518)/N(6)-dimethyladenosine(1519) in 16S rRNA + 4 S-adenosyl-L-homocysteine + 4 H(+). Functionally, specifically dimethylates two adjacent adenosines (A1518 and A1519) in the loop of a conserved hairpin near the 3'-end of 16S rRNA in the 30S particle. May play a critical role in biogenesis of 30S subunits. The chain is Ribosomal RNA small subunit methyltransferase A from Mycoplasmopsis pulmonis (strain UAB CTIP) (Mycoplasma pulmonis).